The following is a 333-amino-acid chain: MLLLPLLLLAVIVPGGDNEDVFQGPTSFHVIQISTFANSTWAQNQGSGWLDNLQLYGWDSDPGTTIFLKPWSKGNFSDEEVTELEELFRVYLIGFTLEVQDHVSEFQLEYPFVIQDIAGCELHPGKAVESFLKGAFGGLDFVSIKNDSCAPVPEGGSMAQRFYELIIQYHAICDTIAKLLLETCPRYFLSVLDAGKAELQRQVKPEAWLSSGPTPGPGRLLLVCHVSGFYPKPVWVMWMRGEQEEPGTQQGDIMPNANWTWHLRATLDVAAGEAAGLSCRVKHSSLGDQDIVLYWGHPTSTGLIFVAIIVSSLILLICLALWFWRRWSYLTIL.

A signal peptide spans 1–18; that stretch reads MLLLPLLLLAVIVPGGDN. Residues 19-302 are Extracellular-facing; it reads EDVFQGPTSF…LYWGHPTSTG (284 aa). Residues Asn-38, Asn-75, Asn-146, and Asn-258 are each glycosylated (N-linked (GlcNAc...) asparagine). 2 disulfide bridges follow: Cys-120–Cys-184 and Cys-224–Cys-279. Positions 185-295 constitute an Ig-like domain; that stretch reads PRYFLSVLDA…LGDQDIVLYW (111 aa). The chain crosses the membrane as a helical span at residues 303–323; it reads LIFVAIIVSSLILLICLALWF. At 324 to 333 the chain is on the cytoplasmic side; that stretch reads WRRWSYLTIL. The Internalization signal motif lies at 329–332; the sequence is YLTI.

Heterodimer with B2M (beta-2-microglobulin). Interacts with saposin C.

The protein resides in the cell membrane. It localises to the endosome membrane. Its subcellular location is the lysosome membrane. Functionally, antigen-presenting protein that binds self and non-self lipid and glycolipid antigens and presents them to T-cell receptors on natural killer T-cells. The chain is T-cell surface glycoprotein CD1b-1 from Ovis aries (Sheep).